The primary structure comprises 364 residues: RNA polymerase II holoenzyme cyclin-like subunit (364 aa).

The 91-residue stretch at 53–143 (QQINRLSKRI…VGECEFSLIS (91 aa)) folds into the Cyclin N-terminal domain. Residues 268-303 (PGFGSQGSQQQAGFSQGNSQGSLQGDSAAAEPKKVT) are disordered. Low complexity predominate over residues 273 to 289 (QGSQQQAGFSQGNSQGS).

The protein belongs to the cyclin family. Cyclin C subfamily. As to quaternary structure, component of the SRB8-11 complex, a regulatory module of the Mediator complex.

The protein resides in the nucleus. Component of the SRB8-11 complex. The SRB8-11 complex is a regulatory module of the Mediator complex which is itself involved in regulation of basal and activated RNA polymerase II-dependent transcription. The SRB8-11 complex may be involved in the transcriptional repression of a subset of genes regulated by Mediator. It may inhibit the association of the Mediator complex with RNA polymerase II to form the holoenzyme complex. The SRB8-11 complex phosphorylates the C-terminal domain (CTD) of the largest subunit of RNA polymerase II. The polypeptide is RNA polymerase II holoenzyme cyclin-like subunit (SSN8) (Chaetomium globosum (strain ATCC 6205 / CBS 148.51 / DSM 1962 / NBRC 6347 / NRRL 1970) (Soil fungus)).